A 322-amino-acid chain; its full sequence is Probable manganese-dependent inorganic pyrophosphatase (322 aa).

Residues His10, Asp14, Asp16, Asp86, His108, and Asp160 each contribute to the Mn(2+) site.

The protein belongs to the PPase class C family. Mn(2+) serves as cofactor.

It is found in the cytoplasm. It catalyses the reaction diphosphate + H2O = 2 phosphate + H(+). The chain is Probable manganese-dependent inorganic pyrophosphatase (ppaC) from Archaeoglobus fulgidus (strain ATCC 49558 / DSM 4304 / JCM 9628 / NBRC 100126 / VC-16).